The chain runs to 125 residues: Small ribosomal subunit protein uS13 (125 aa).

This sequence belongs to the universal ribosomal protein uS13 family. In terms of assembly, part of the 30S ribosomal subunit. Forms a loose heterodimer with protein S19. Forms two bridges to the 50S subunit in the 70S ribosome.

In terms of biological role, located at the top of the head of the 30S subunit, it contacts several helices of the 16S rRNA. In the 70S ribosome it contacts the 23S rRNA (bridge B1a) and protein L5 of the 50S subunit (bridge B1b), connecting the 2 subunits; these bridges are implicated in subunit movement. Contacts the tRNAs in the A and P-sites. This is Small ribosomal subunit protein uS13 from Rickettsia typhi (strain ATCC VR-144 / Wilmington).